A 347-amino-acid chain; its full sequence is Protein RecA (347 aa).

ATP is bound at residue 64-71; it reads GPESSGKT.

Belongs to the RecA family.

The protein resides in the cytoplasm. Functionally, can catalyze the hydrolysis of ATP in the presence of single-stranded DNA, the ATP-dependent uptake of single-stranded DNA by duplex DNA, and the ATP-dependent hybridization of homologous single-stranded DNAs. It interacts with LexA causing its activation and leading to its autocatalytic cleavage. In Bartonella bacilliformis (strain ATCC 35685 / KC583 / Herrer 020/F12,63), this protein is Protein RecA.